The following is a 224-amino-acid chain: V-type ATP synthase subunit D (224 aa).

The segment at R190–D224 is disordered. The segment covering A201–E212 has biased composition (basic and acidic residues). The segment covering A213–D224 has biased composition (low complexity).

It belongs to the V-ATPase D subunit family.

Produces ATP from ADP in the presence of a proton gradient across the membrane. The sequence is that of V-type ATP synthase subunit D (atpD) from Deinococcus radiodurans (strain ATCC 13939 / DSM 20539 / JCM 16871 / CCUG 27074 / LMG 4051 / NBRC 15346 / NCIMB 9279 / VKM B-1422 / R1).